A 72-amino-acid chain; its full sequence is Alpha-elapitoxin-Djk2a (72 aa).

Disulfide bonds link cysteine 3/cysteine 21, cysteine 14/cysteine 42, cysteine 27/cysteine 31, cysteine 46/cysteine 57, and cysteine 58/cysteine 63.

Belongs to the three-finger toxin family. Long-chain subfamily. Type II alpha-neurotoxin sub-subfamily. In terms of tissue distribution, expressed by the venom gland.

Its subcellular location is the secreted. Binds with high affinity to muscular (alpha-1/CHRNA1) and neuronal (alpha-7/CHRNA7) nicotinic acetylcholine receptor (nAChR) and inhibits acetylcholine from binding to the receptor, thereby impairing neuromuscular and neuronal transmission. The chain is Alpha-elapitoxin-Djk2a from Dendroaspis jamesoni kaimosae (Eastern Jameson's mamba).